A 454-amino-acid polypeptide reads, in one-letter code: MALNVVILAAGKGTRMRSDLPKVLHPIAHKSMVQHVIDTAHSIGSDAIQLVYGYGADKLKSALGEQQLNWMLQAEQLGTGHAVAQAIPNIDDNDTVLILYGDVPLIQASTLEALLAARPDHGVAILTVNLVNPTGYGRIVREQGKVVGIVEQKDANAEQLAINEINTGIMAVPGKALKTWLGRLSNNNAQGEYYLTDIIAMAHADGVEINTAQPQSAIEVEGANNRVQLAQLERAYQAREAEKLMIAGANLRDPSRIDIRGEVTVGMDVMVDVNVIFEGKVVIGNNVSIGAGAILIDCEIADNAEIKPYSIIEGAKLGVAASAGPFARLRPGAELMQDAHIGNFVEMKKAVLGVGSKAGHLAYLGDAQIGAGVNIGAGTITCNYDGANKHLTVIEDNVFVGSDTQLVAPVTIGKGATLGAGSTITRDVGEDELVITRVKQKHLTGWQRPVKIKK.

The interval 1 to 226 (MALNVVILAA…AIEVEGANNR (226 aa)) is pyrophosphorylase. Residues 8–11 (LAAG), lysine 22, glutamine 73, 78–79 (GT), 100–102 (YGD), glycine 137, glutamate 151, asparagine 166, and asparagine 224 each bind UDP-N-acetyl-alpha-D-glucosamine. Aspartate 102 provides a ligand contact to Mg(2+). Position 224 (asparagine 224) interacts with Mg(2+). A linker region spans residues 227-247 (VQLAQLERAYQAREAEKLMIA). The tract at residues 248–454 (GANLRDPSRI…GWQRPVKIKK (207 aa)) is N-acetyltransferase. UDP-N-acetyl-alpha-D-glucosamine is bound by residues arginine 330 and lysine 348. Histidine 360 serves as the catalytic Proton acceptor. Tyrosine 363 and asparagine 374 together coordinate UDP-N-acetyl-alpha-D-glucosamine. Acetyl-CoA contacts are provided by residues alanine 377, 383 to 384 (NY), serine 402, alanine 420, and arginine 437.

In the N-terminal section; belongs to the N-acetylglucosamine-1-phosphate uridyltransferase family. This sequence in the C-terminal section; belongs to the transferase hexapeptide repeat family. In terms of assembly, homotrimer. Mg(2+) serves as cofactor.

Its subcellular location is the cytoplasm. It catalyses the reaction alpha-D-glucosamine 1-phosphate + acetyl-CoA = N-acetyl-alpha-D-glucosamine 1-phosphate + CoA + H(+). The enzyme catalyses N-acetyl-alpha-D-glucosamine 1-phosphate + UTP + H(+) = UDP-N-acetyl-alpha-D-glucosamine + diphosphate. Its pathway is nucleotide-sugar biosynthesis; UDP-N-acetyl-alpha-D-glucosamine biosynthesis; N-acetyl-alpha-D-glucosamine 1-phosphate from alpha-D-glucosamine 6-phosphate (route II): step 2/2. It participates in nucleotide-sugar biosynthesis; UDP-N-acetyl-alpha-D-glucosamine biosynthesis; UDP-N-acetyl-alpha-D-glucosamine from N-acetyl-alpha-D-glucosamine 1-phosphate: step 1/1. It functions in the pathway bacterial outer membrane biogenesis; LPS lipid A biosynthesis. Its function is as follows. Catalyzes the last two sequential reactions in the de novo biosynthetic pathway for UDP-N-acetylglucosamine (UDP-GlcNAc). The C-terminal domain catalyzes the transfer of acetyl group from acetyl coenzyme A to glucosamine-1-phosphate (GlcN-1-P) to produce N-acetylglucosamine-1-phosphate (GlcNAc-1-P), which is converted into UDP-GlcNAc by the transfer of uridine 5-monophosphate (from uridine 5-triphosphate), a reaction catalyzed by the N-terminal domain. The protein is Bifunctional protein GlmU of Shewanella sp. (strain MR-4).